The following is a 105-amino-acid chain: Putative zinc finger protein 861 (105 aa).

Residues 75-97 form a C2H2-type zinc finger; that stretch reads YTCKPCGNAFRFHHSFHIHERPH.

The protein is Putative zinc finger protein 861 (ZNF861P) of Homo sapiens (Human).